The following is a 248-amino-acid chain: Probable transcriptional regulatory protein Msil_2305 (248 aa).

The protein belongs to the TACO1 family.

It localises to the cytoplasm. In Methylocella silvestris (strain DSM 15510 / CIP 108128 / LMG 27833 / NCIMB 13906 / BL2), this protein is Probable transcriptional regulatory protein Msil_2305.